A 258-amino-acid chain; its full sequence is MTLPYYASAEQIMRDKTELARKGIARGRSVVVLTYDKGVLFVAENPSATLHKVSELYDRIGFAAVGKYNEFESLRRGGILQADLRGYQYDRRDVTGRALANAYAQALGTVFNDQLKPFEVEICVAEVGYPEQSPEAVLYRINFDGAIVDEREFVVMGGTTEPIVAALKDSYQPGLDLSSAVGVAVQALQASGPEGADKEKRTIGVSQLEVATLEQARPRRAFRRVTKTALEQLLVGNGVDTSVGKATTTVELPEEPAE.

This sequence belongs to the peptidase T1A family. In terms of assembly, the 20S proteasome core is composed of 14 alpha and 14 beta subunits that assemble into four stacked heptameric rings, resulting in a barrel-shaped structure. The two inner rings, each composed of seven catalytic beta subunits, are sandwiched by two outer rings, each composed of seven alpha subunits. The catalytic chamber with the active sites is on the inside of the barrel. Has a gated structure, the ends of the cylinder being occluded by the N-termini of the alpha-subunits. Is capped by the proteasome-associated ATPase, ARC.

The protein resides in the cytoplasm. It functions in the pathway protein degradation; proteasomal Pup-dependent pathway. With respect to regulation, the formation of the proteasomal ATPase ARC-20S proteasome complex, likely via the docking of the C-termini of ARC into the intersubunit pockets in the alpha-rings, may trigger opening of the gate for substrate entry. Interconversion between the open-gate and close-gate conformations leads to a dynamic regulation of the 20S proteasome proteolysis activity. Its function is as follows. Component of the proteasome core, a large protease complex with broad specificity involved in protein degradation. The polypeptide is Proteasome subunit alpha (Nocardia farcinica (strain IFM 10152)).